Consider the following 704-residue polypeptide: Protein polyglycylase TTLL10 (704 aa).

Disordered regions lie at residues 1-32 (MALHPQAGRPHRDGSEAQAEAAAQDLGRLPSP), 46-125 (GHRA…SVKE), and 137-170 (DADDLEEEEAARLPVTSPDGLLMEGDKQPSPGQG). Residues 93 to 105 (VSSKRSKRSRIHP) show a composition bias toward basic residues. Basic and acidic residues predominate over residues 114–125 (THEKQMGSSVKE). The TTL domain maps to 169–540 (QGPFFYIGGT…TCQKSLHSQK (372 aa)). Residues K301, 307 to 308 (QG), 350 to 353 (QRYV), 363 to 365 (KFD), and 406 to 407 (TN) each bind ATP. Q307 provides a ligand contact to a protein. Residues D486, E499, and N501 each contribute to the Mg(2+) site. Positions 565-704 (LASSRPLNRL…EQRSTSHRGS (140 aa)) are disordered. Pro residues-rich tracts occupy residues 576–588 (NPNPNPNPNANPH) and 596–612 (HPHPNPHPNANPHPPRP). 2 stretches are compositionally biased toward low complexity: residues 616–629 (AASSALSSARAAIS) and 654–667 (SDSSGSSIAESEPS).

Mg(2+) serves as cofactor. In terms of tissue distribution, highly expressed in testis. Expressed in brain, heart, kidney, liver, lung, muscle and trachea.

It localises to the cytoplasm. It is found in the cytoskeleton. The protein resides in the cell projection. The protein localises to the cilium. Its subcellular location is the cilium axoneme. The catalysed reaction is (glycyl)(n)-glycyl-L-glutamyl-[protein] + glycine + ATP = (glycyl)(n+1)-glycyl-L-glutamyl-[protein] + ADP + phosphate + H(+). Its function is as follows. Polyglycylase which modifies both tubulin and non-tubulin proteins, generating polyglycine side chains of variable lengths on the gamma-carboxyl groups of specific glutamate residues of target proteins. Involved in the elongation step rather than the initiation step of the polyglycylation reaction. Polyglycylates alpha-tubulin and beta-tubulin. Polyglycylates non-tubulin proteins such as nucleosome assembly protein NAP1. In Mus musculus (Mouse), this protein is Protein polyglycylase TTLL10.